A 517-amino-acid chain; its full sequence is N-acetylglucosamine-1-phosphodiester alpha-N-acetylglucosaminidase (517 aa).

The first 25 residues, 1-25, serve as a signal peptide directing secretion; that stretch reads MAAPRGPGLFLIPALLGLLGVAWCS. A propeptide spans 26–49 (removed in mature form); it reads LSFGVSRDDDLLLPYPLARRRPSR. A disordered region spans residues 49–75; the sequence is RDCARVRSGSPEQESWPPPPTNPGASH. Residues 50-453 lie on the Lumenal side of the membrane; that stretch reads DCARVRSGSP…ASFTRTTWLA (404 aa). Disulfide bonds link Cys-116-Cys-149, Cys-133-Cys-324, Cys-308-Cys-315, Cys-363-Cys-374, and Cys-381-Cys-390. Residues Asn-215 and Asn-297 are each glycosylated (N-linked (GlcNAc...) asparagine). Positions 359 to 391 constitute an EGF-like domain; that stretch reads SELDCGPSNCSQHGLCTETGCHCDAGWTGSNCS. Residues Asn-367, Asn-389, and Asn-421 are each glycosylated (N-linked (GlcNAc...) asparagine). Residues 454–474 form a helical membrane-spanning segment; it reads LTLTLIFLLLISTGVNVSLFL. The Cytoplasmic portion of the chain corresponds to 475-517; that stretch reads GSRAERNRHLDGDYVYHPLQEVNGEALTAEKEHMEETSNPFKD. The Tyrosine-based internalization motif motif lies at 488–491; it reads YVYH. The tract at residues 488–495 is mediates the interaction with AP4M1; the sequence is YVYHPLQE. An NPF internalization motif motif is present at residues 511-515; sequence TSNPF.

In terms of assembly, homotetramer arranged as two disulfide-linked homodimers. Interacts with AP4M1. The precursor is cleaved and activated in the trans-Golgi network by a furin endopeptidase.

It is found in the golgi apparatus. The protein localises to the golgi stack membrane. Its subcellular location is the trans-Golgi network. The enzyme catalyses N(4)-[6-(N-acetyl-alpha-D-glucosaminyl-1-phospho)-alpha-D-mannosyl-(1-&gt;2)-alpha-D-mannosyl-(glycan)]-L-asparaginyl-[protein] + H2O = N(4)-[6-phospho-alpha-D-mannosyl-(1-&gt;2)-alpha-D-mannosyl-(glycan)]-L-asparaginyl-[protein] + N-acetyl-D-glucosamine + H(+). The protein operates within protein modification; protein glycosylation. Catalyzes the second step in the formation of the mannose 6-phosphate targeting signal on lysosomal enzyme oligosaccharides by removing GlcNAc residues from GlcNAc-alpha-P-mannose moieties, which are formed in the first step. Also hydrolyzes UDP-GlcNAc, a sugar donor for Golgi N-acetylglucosaminyltransferases. The sequence is that of N-acetylglucosamine-1-phosphodiester alpha-N-acetylglucosaminidase (Nagpa) from Mus musculus (Mouse).